The following is a 275-amino-acid chain: Dermonecrotic toxin SpeSicTox-betaIIA3ii (275 aa).

Residue His-5 is part of the active site. Mg(2+) contacts are provided by Glu-25 and Asp-27. The active-site Nucleophile is the His-41. 2 cysteine pairs are disulfide-bonded: Cys-45–Cys-51 and Cys-47–Cys-190. Asp-85 is a binding site for Mg(2+).

It belongs to the arthropod phospholipase D family. Class II subfamily. Requires Mg(2+) as cofactor. In terms of tissue distribution, expressed by the venom gland.

The protein resides in the secreted. The catalysed reaction is an N-(acyl)-sphingosylphosphocholine = an N-(acyl)-sphingosyl-1,3-cyclic phosphate + choline. The enzyme catalyses an N-(acyl)-sphingosylphosphoethanolamine = an N-(acyl)-sphingosyl-1,3-cyclic phosphate + ethanolamine. It carries out the reaction a 1-acyl-sn-glycero-3-phosphocholine = a 1-acyl-sn-glycero-2,3-cyclic phosphate + choline. It catalyses the reaction a 1-acyl-sn-glycero-3-phosphoethanolamine = a 1-acyl-sn-glycero-2,3-cyclic phosphate + ethanolamine. Dermonecrotic toxins cleave the phosphodiester linkage between the phosphate and headgroup of certain phospholipids (sphingolipid and lysolipid substrates), forming an alcohol (often choline) and a cyclic phosphate. This toxin acts on sphingomyelin (SM). It may also act on ceramide phosphoethanolamine (CPE), lysophosphatidylcholine (LPC) and lysophosphatidylethanolamine (LPE), but not on lysophosphatidylserine (LPS), and lysophosphatidylglycerol (LPG). It acts by transphosphatidylation, releasing exclusively cyclic phosphate products as second products. Induces dermonecrosis, hemolysis, increased vascular permeability, edema, inflammatory response, and platelet aggregation. The protein is Dermonecrotic toxin SpeSicTox-betaIIA3ii of Sicarius peruensis (Six-eyed sand spider).